A 603-amino-acid polypeptide reads, in one-letter code: Granule-bound starch synthase 1, chloroplastic/amyloplastic (603 aa).

Residues Met1–Cys75 constitute a chloroplast transit peptide. Lys91 contacts ADP-alpha-D-glucose.

Belongs to the glycosyltransferase 1 family. Bacterial/plant glycogen synthase subfamily. Expressed in pods and leaves. No expression in flowers or stipules.

The protein localises to the plastid. Its subcellular location is the chloroplast. It is found in the amyloplast. The enzyme catalyses an NDP-alpha-D-glucose + [(1-&gt;4)-alpha-D-glucosyl](n) = [(1-&gt;4)-alpha-D-glucosyl](n+1) + a ribonucleoside 5'-diphosphate + H(+). Its pathway is glycan biosynthesis; starch biosynthesis. Functionally, may be responsible for the synthesis of amylose. The polypeptide is Granule-bound starch synthase 1, chloroplastic/amyloplastic (Pisum sativum (Garden pea)).